The sequence spans 133 residues: ATP synthase epsilon chain, chloroplastic (133 aa).

Belongs to the ATPase epsilon chain family. In terms of assembly, F-type ATPases have 2 components, CF(1) - the catalytic core - and CF(0) - the membrane proton channel. CF(1) has five subunits: alpha(3), beta(3), gamma(1), delta(1), epsilon(1). CF(0) has three main subunits: a, b and c.

The protein resides in the plastid. The protein localises to the chloroplast thylakoid membrane. Produces ATP from ADP in the presence of a proton gradient across the membrane. The protein is ATP synthase epsilon chain, chloroplastic of Morus indica (Mulberry).